A 253-amino-acid chain; its full sequence is CTP:phosphoglutamine cytidylyltransferase (253 aa).

It carries out the reaction N(5)-phospho-L-glutamine + CTP + H(+) = N(5)-(cytidine 5'-diphosphoramidyl)-L-glutamine + diphosphate. Its pathway is capsule biogenesis; capsule polysaccharide biosynthesis. Involved in the biosynthesis of the O-methyl phosphoramidate (MeOPN) group found on the capsular polysaccharide (CPS) of C.jejuni. Catalyzes the formation of CDP-L-glutamine from CTP and L-glutamine phosphate. In the presence of MnCTP, catalyzes the displacement of pyrophosphate from CTP using phosphoramidate, methyl phosphate, methyl phosphonate, phosphate, arsenate, ethanolamine phosphate, (R/S)-glycerol-1-phosphate, glycerol-2-phosphate, serinol phosphate, L-serine phosphate and 3-phospho-D-glycerate as substrate in addition to L-glutamine phosphate. The chain is CTP:phosphoglutamine cytidylyltransferase from Campylobacter jejuni subsp. jejuni serotype O:2 (strain ATCC 700819 / NCTC 11168).